The primary structure comprises 152 residues: MAVYKVVEIGDPILKEIAKPIKEITPNIIKLLENMADTMYAYNGVGLAAPQIGVSKRAIVVDVGEGLIELINPEIIEVSGEEKDIEGCLSVPGVQGEVVRAKKVTVKGLNRYGEEIVIPAEGLLARAFQHEIDHLNGILFVEKADNIVRKGR.

2 residues coordinate Fe cation: cysteine 88 and histidine 130. Glutamate 131 is a catalytic residue. A Fe cation-binding site is contributed by histidine 134.

This sequence belongs to the polypeptide deformylase family. Requires Fe(2+) as cofactor.

The enzyme catalyses N-terminal N-formyl-L-methionyl-[peptide] + H2O = N-terminal L-methionyl-[peptide] + formate. Removes the formyl group from the N-terminal Met of newly synthesized proteins. Requires at least a dipeptide for an efficient rate of reaction. N-terminal L-methionine is a prerequisite for activity but the enzyme has broad specificity at other positions. This is Peptide deformylase from Carboxydothermus hydrogenoformans (strain ATCC BAA-161 / DSM 6008 / Z-2901).